Reading from the N-terminus, the 241-residue chain is Protein-L-isoaspartate O-methyltransferase (241 aa).

Ser69 is an active-site residue.

This sequence belongs to the methyltransferase superfamily. L-isoaspartyl/D-aspartyl protein methyltransferase family.

Its subcellular location is the cytoplasm. It catalyses the reaction [protein]-L-isoaspartate + S-adenosyl-L-methionine = [protein]-L-isoaspartate alpha-methyl ester + S-adenosyl-L-homocysteine. Functionally, catalyzes the methyl esterification of L-isoaspartyl residues in peptides and proteins that result from spontaneous decomposition of normal L-aspartyl and L-asparaginyl residues. It plays a role in the repair and/or degradation of damaged proteins. The sequence is that of Protein-L-isoaspartate O-methyltransferase from Hyperthermus butylicus (strain DSM 5456 / JCM 9403 / PLM1-5).